A 353-amino-acid chain; its full sequence is 2-Hydroxyacid oxidase 2 (353 aa).

Positions 2 to 353 (PLVCLADFKA…SPDLIQFSRL (352 aa)) constitute an FMN hydroxy acid dehydrogenase domain. FMN contacts are provided by residues 77–79 (PTA), Ser106, and Gln128. Tyr130 provides a ligand contact to a 2-oxocarboxylate. A Phosphoserine modification is found at Ser133. Thr156 contacts FMN. Arg165 provides a ligand contact to a 2-oxocarboxylate. An FMN-binding site is contributed by Lys224. Residue His248 is the Proton acceptor of the active site. Arg251 serves as a coordination point for a 2-oxocarboxylate. FMN is bound by residues 279-283 (DGGVR) and 302-303 (GR). Positions 351 to 353 (SRL) match the Microbody targeting signal motif.

This sequence belongs to the FMN-dependent alpha-hydroxy acid dehydrogenase family. Homotetramer. Could also form homooctamer. FMN serves as cofactor. In terms of tissue distribution, expressed in kidney.

It is found in the peroxisome. It catalyses the reaction a (2S)-2-hydroxycarboxylate + O2 = a 2-oxocarboxylate + H2O2. The enzyme catalyses 2-hydroxyoctanoate + O2 = 2-oxooctanoate + H2O2. It carries out the reaction 2-hydroxyhexadecanoate + O2 = 2-oxohexadecanoate + H2O2. The catalysed reaction is 2-hydroxyhexanoate + O2 = 2-oxohexanoate + H2O2. It catalyses the reaction mandelate + O2 = phenylglyoxylate + H2O2. With respect to regulation, is inhibited in vitro by CCPST (4-carboxy-5-(4-chlorophenyl)sulfanyl-1,2,3-thiadiazole). In terms of biological role, oxidase that catalyzes the oxidation of medium and long chain hydroxyacids such as 2-hydroxyhexadecanoate, 2-hydroxyoctanoate, 2-hydroxyhexanoate and 2-hydroxybutanoate, to the correspondong 2-oxoacids. Its role in the oxidation of 2-hydroxy fatty acids may contribute to the general pathway of fatty acid alpha-oxidation. Can also use mandelate as substrate. Active in vitro with the artificial electron acceptor 2,6-dichlorophenolindophenol (DCIP), but O2 is believed to be the physiological electron acceptor, leading to the production of H2O2. The protein is 2-Hydroxyacid oxidase 2 (Hao2) of Rattus norvegicus (Rat).